Here is a 134-residue protein sequence, read N- to C-terminus: Prefoldin subunit 4 (134 aa).

A2 carries the post-translational modification N-acetylalanine. S125 carries the post-translational modification Phosphoserine.

Belongs to the prefoldin subunit beta family. Heterohexamer of two PFD-alpha type and four PFD-beta type subunits. Interacts with URI1; the interaction is phosphorylation-dependent and occurs in a growth-dependent manner.

The protein resides in the nucleus. It localises to the cytoplasm. Its subcellular location is the mitochondrion. Functionally, binds specifically to cytosolic chaperonin (c-CPN) and transfers target proteins to it. Binds to nascent polypeptide chain and promotes folding in an environment in which there are many competing pathways for nonnative proteins. This Homo sapiens (Human) protein is Prefoldin subunit 4 (PFDN4).